The chain runs to 160 residues: V-type proton ATPase subunit c (160 aa).

The Vacuolar segment spans residues 1 to 8; it reads MTELCPVY. The helical transmembrane segment at 9–31 threads the bilayer; the sequence is APFFGAIGCASAIIFTSLGAAYG. At 32–53 the chain is on the cytoplasmic side; it reads TAKSGVGICATCVLRPDLLFKN. The chain crosses the membrane as a helical span at residues 54-74; it reads IVPVIMAGIIAIYGLVVSVLV. The Vacuolar segment spans residues 75–90; sequence CYSLGQKQALYTGFIQ. Residues 91-112 traverse the membrane as a helical segment; sequence LGAGLSVGLSGLAAGFAIGIVG. Topologically, residues 113 to 124 are cytoplasmic; it reads DAGVRGSSQQPR. A helical transmembrane segment spans residues 125–150; it reads LFVGMILILIFAEVLGLYGLIVALLL. The Vacuolar portion of the chain corresponds to 151–160; the sequence is NSRATQDVVC.

Belongs to the V-ATPase proteolipid subunit family. In terms of assembly, V-ATPase is a heteromultimeric enzyme composed of a peripheral catalytic V1 complex (components A to H) attached to an integral membrane V0 proton pore complex (components: a, c, c', c'', d, e, f and VOA1). The decameric c-ring forms the proton-conducting pore, and is composed of eight proteolipid subunits c, one subunit c' and one subunit c''.

It localises to the vacuole membrane. Its function is as follows. Proton-conducting pore forming subunit of the V0 complex of vacuolar(H+)-ATPase (V-ATPase), a multisubunit enzyme composed of a peripheral complex (V1) that hydrolyzes ATP and a membrane integral complex (V0) that translocates protons. V-ATPase is responsible for acidifying and maintaining the pH of intracellular compartments. In Saccharomyces cerevisiae (strain ATCC 204508 / S288c) (Baker's yeast), this protein is V-type proton ATPase subunit c (VMA3).